A 55-amino-acid chain; its full sequence is Metallothionein-1 (55 aa).

Belongs to the metallothionein superfamily. Type 11 family.

The sequence is that of Metallothionein-1 (MTP1) from Yarrowia lipolytica (strain CLIB 122 / E 150) (Yeast).